Consider the following 156-residue polypeptide: CD-NTase/cGAS isopeptidase (156 aa).

The MPN domain maps to Ile-9–Ile-147. Glu-38 (proton donor/acceptor) is an active-site residue. Zn(2+)-binding residues include His-100, His-102, and Asp-113. The JAMM motif signature appears at His-100–Asp-113.

Belongs to the peptidase M67B family. Cap3 isopeptidase subfamily.

In terms of biological role, metalloprotease priming reversal component of a CBASS antivirus system. CBASS (cyclic oligonucleotide-based antiphage signaling system) provides immunity against bacteriophages. The CD-NTase protein (DncV) synthesizes cyclic nucleotides in response to infection; these serve as specific second messenger signals. The signals activate a diverse range of effectors, leading to bacterial cell death and thus abortive phage infection. A type II-A(GA) CBASS system. Its function is as follows. Reverses the primed state of DncV, the CD-NTase, cleaving it from cellular proteins. Cleaves a Sumo-DncV-DncV fusion protein precisely between the 2 DncV moieties. Functionally, protects E.coli against phage infection. When capV and dncV are introduced in E.coli MG1655 there is 1000-fold protection against phage P1; protection against other phage (T4, T5 and T6) requires the 2 subsequent genes. In another paper the capV-dncV-cap2-cap3 operon gives 10(4)-10(5)-fold protection against phages lambda, T2, T4 and T6, about 1000-fold protection against P1 and 10-fold protection against T5. The sequence is that of CD-NTase/cGAS isopeptidase from Escherichia coli (strain TW11681).